Consider the following 306-residue polypeptide: Polyisoprenyl-teichoic acid--peptidoglycan teichoic acid transferase TagU (306 aa).

Residues 1-11 are Cytoplasmic-facing; sequence MRAEKRKKKKK. The helical; Signal-anchor for type II membrane protein transmembrane segment at 12-32 threads the bilayer; sequence ILYTIIALIGIFVLSTGSYAY. The Extracellular portion of the chain corresponds to 33–306; the sequence is YLWHKAASTV…TAELKESLNK (274 aa).

Belongs to the LytR/CpsA/Psr (LCP) family.

Its subcellular location is the cell membrane. Its pathway is cell wall biogenesis. May catalyze the final step in cell wall teichoic acid biosynthesis, the transfer of the anionic cell wall polymers (APs) from their lipid-linked precursor to the cell wall peptidoglycan (PG). In Bacillus licheniformis (strain ATCC 14580 / DSM 13 / JCM 2505 / CCUG 7422 / NBRC 12200 / NCIMB 9375 / NCTC 10341 / NRRL NRS-1264 / Gibson 46), this protein is Polyisoprenyl-teichoic acid--peptidoglycan teichoic acid transferase TagU.